We begin with the raw amino-acid sequence, 170 residues long: NADPH-dependent 7-cyano-7-deazaguanine reductase (170 aa).

Cysteine 58 serves as the catalytic Thioimide intermediate. Aspartate 65 serves as the catalytic Proton donor. Substrate contacts are provided by residues 80-82 and 99-100; these read VES and HE.

Belongs to the GTP cyclohydrolase I family. QueF type 1 subfamily.

The protein localises to the cytoplasm. The enzyme catalyses 7-aminomethyl-7-carbaguanine + 2 NADP(+) = 7-cyano-7-deazaguanine + 2 NADPH + 3 H(+). It participates in tRNA modification; tRNA-queuosine biosynthesis. Its function is as follows. Catalyzes the NADPH-dependent reduction of 7-cyano-7-deazaguanine (preQ0) to 7-aminomethyl-7-deazaguanine (preQ1). This chain is NADPH-dependent 7-cyano-7-deazaguanine reductase, found in Bdellovibrio bacteriovorus (strain ATCC 15356 / DSM 50701 / NCIMB 9529 / HD100).